Here is a 506-residue protein sequence, read N- to C-terminus: NAD(P)H-quinone oxidoreductase subunit 2 (506 aa).

13 helical membrane-spanning segments follow: residues 14 to 34, 42 to 62, 79 to 99, 108 to 128, 132 to 152, 167 to 187, 206 to 226, 240 to 260, 276 to 296, 302 to 322, 330 to 350, 374 to 394, and 409 to 429; these read AIIP…VDLA, WAPI…ALQW, LAIA…LISW, PIGE…LLCG, LISI…LSGY, LLVG…LYGL, FITS…IAAV, PTPV…AFAI, LLFT…ALAQ, MLAY…VSGT, VLYL…VILF, LGLS…GFFG, and LLVI…ISVI.

The protein belongs to the complex I subunit 2 family. NDH-1 can be composed of about 15 different subunits; different subcomplexes with different compositions have been identified which probably have different functions.

Its subcellular location is the cellular thylakoid membrane. It catalyses the reaction a plastoquinone + NADH + (n+1) H(+)(in) = a plastoquinol + NAD(+) + n H(+)(out). It carries out the reaction a plastoquinone + NADPH + (n+1) H(+)(in) = a plastoquinol + NADP(+) + n H(+)(out). NDH-1 shuttles electrons from an unknown electron donor, via FMN and iron-sulfur (Fe-S) centers, to quinones in the respiratory and/or the photosynthetic chain. The immediate electron acceptor for the enzyme in this species is believed to be plastoquinone. Couples the redox reaction to proton translocation, and thus conserves the redox energy in a proton gradient. Cyanobacterial NDH-1 also plays a role in inorganic carbon-concentration. This Prochlorococcus marinus (strain MIT 9312) protein is NAD(P)H-quinone oxidoreductase subunit 2.